Here is a 494-residue protein sequence, read N- to C-terminus: Alpha-amylase B (494 aa).

Positions 1 to 18 are cleaved as a signal peptide; it reads MFLAKSIVCLALLAVANA. Residue glutamine 19 is modified to Pyrrolidone carboxylic acid. The cysteines at positions 46 and 102 are disulfide-linked. The Ca(2+) site is built by asparagine 116, arginine 165, and aspartate 174. Cysteines 153 and 167 form a disulfide. Chloride is bound at residue arginine 202. Aspartate 204 (nucleophile) is an active-site residue. Histidine 208 provides a ligand contact to Ca(2+). The active-site Proton donor is glutamate 241. Positions 304 and 343 each coordinate chloride. 2 disulfide bridges follow: cysteine 376–cysteine 382 and cysteine 448–cysteine 460.

This sequence belongs to the glycosyl hydrolase 13 family. In terms of assembly, monomer. Ca(2+) serves as cofactor. It depends on chloride as a cofactor.

It carries out the reaction Endohydrolysis of (1-&gt;4)-alpha-D-glucosidic linkages in polysaccharides containing three or more (1-&gt;4)-alpha-linked D-glucose units.. This chain is Alpha-amylase B (Amy-d), found in Drosophila yakuba (Fruit fly).